The following is a 271-amino-acid chain: Formamidopyrimidine-DNA glycosylase (271 aa).

Proline 2 acts as the Schiff-base intermediate with DNA in catalysis. Glutamate 3 serves as the catalytic Proton donor. Lysine 57 functions as the Proton donor; for beta-elimination activity in the catalytic mechanism. Positions 90, 109, and 151 each coordinate DNA. Residues 236 to 270 (HVYSRGGETCTSCGNLLSEIRLGQRTTVFCGICQT) form an FPG-type zinc finger. Catalysis depends on arginine 260, which acts as the Proton donor; for delta-elimination activity.

It belongs to the FPG family. In terms of assembly, monomer. Zn(2+) is required as a cofactor.

The catalysed reaction is Hydrolysis of DNA containing ring-opened 7-methylguanine residues, releasing 2,6-diamino-4-hydroxy-5-(N-methyl)formamidopyrimidine.. It carries out the reaction 2'-deoxyribonucleotide-(2'-deoxyribose 5'-phosphate)-2'-deoxyribonucleotide-DNA = a 3'-end 2'-deoxyribonucleotide-(2,3-dehydro-2,3-deoxyribose 5'-phosphate)-DNA + a 5'-end 5'-phospho-2'-deoxyribonucleoside-DNA + H(+). Its function is as follows. Involved in base excision repair of DNA damaged by oxidation or by mutagenic agents. Acts as a DNA glycosylase that recognizes and removes damaged bases. Has a preference for oxidized purines, such as 7,8-dihydro-8-oxoguanine (8-oxoG). Has AP (apurinic/apyrimidinic) lyase activity and introduces nicks in the DNA strand. Cleaves the DNA backbone by beta-delta elimination to generate a single-strand break at the site of the removed base with both 3'- and 5'-phosphates. The sequence is that of Formamidopyrimidine-DNA glycosylase from Shewanella baltica (strain OS195).